The chain runs to 561 residues: MKYIVMQDVFFVVLLLVLAVPLGIYMYKVMIGEKVFLSRVLEPVERFGYRLMGVSEVGMSAKRYAVSVLAFSAVGFVFVMAVLMLQGFLPLNPEGMKGLSFSLAFNTAASFVSNTNWQAYSGETALSYFSQSIGLTVQNFVSAATGIAVLFAVIRGFIWKKQKTVGNFWQDLFRVTLYILLPLSLVLALLLVSQGVVQSFADYSVVETLENGAKQLIPLGPAASQIAIKQLGTNGGGFFGANSAFPFENPSSFTNLIEMLAILLIPVALVVMFGRAVKDSKQGRAIMTAMMIVFVIGVVAITISEQFAGPHYQGVATSGSMEGKEVRFGVGGSSLFAASTTAASNGAVNAMHDSLTPLGGLVPMFFMQLGEVIFGGVGSGLYGMIGFIILTVFIAGLLVGRTPEYLGKKIEPYDMKMVCLLILVPPLLTLFGTAVAVMMPSVQASVSASGAHGFSEVLYAFTSMGNNNGSAFAGFAADTTFTNMVGAVMMLLARFIPLVAALYLAQNMAGKSSVAASSGTLSTKNGMFIGLLIGVVVLVGALSFLPALALGPIADFFTTFK.

Transmembrane regions (helical) follow at residues isoleucine 4–isoleucine 24, alanine 65–leucine 85, isoleucine 133–valine 153, leucine 177–valine 197, phenylalanine 253–phenylalanine 273, alanine 285–glutamate 305, glycine 380–glycine 400, methionine 417–valine 437, methionine 484–leucine 504, and phenylalanine 528–leucine 548.

This sequence belongs to the KdpA family. The system is composed of three essential subunits: KdpA, KdpB and KdpC.

The protein resides in the cell membrane. Functionally, part of the high-affinity ATP-driven potassium transport (or Kdp) system, which catalyzes the hydrolysis of ATP coupled with the electrogenic transport of potassium into the cytoplasm. This subunit binds the extracellular potassium ions and delivers the ions to the membrane domain of KdpB through an intramembrane tunnel. The protein is Potassium-transporting ATPase potassium-binding subunit of Listeria monocytogenes serotype 4a (strain HCC23).